The sequence spans 328 residues: MKQPVRVAVTGAAGQIGYSLLFRIASGEMLGKDQPVILQLLEVPVEKAQQALKGVMMELDDCAFPLLAGMIGTDDPKVAFKDADYALLVGSRPRGPGMERADLLKVNGEIFIGQGQALNEVASRDVKVLVVGNPANTNAYIAMKSAPDLPAKNFTAMLRLDHNRALTQVAQKAGVAVADIEKLTVWGNHSPTMYADYRFATANGESLKDKINDPAWNKDVFLPTVGKRGAAIIEARGLSSAASAANAAIDHMRDWALGTNGKWVTMGVPSDGSYGIPEGVMFGFPVTTENGEYKIVQGLEIDEFSRERINFTLNELEEERAAIADMVK.

11 to 17 (GAAGQIG) provides a ligand contact to NAD(+). Substrate-binding residues include Arg-94 and Arg-100. Residues Asn-107, Gln-114, and 131–133 (VGN) contribute to the NAD(+) site. Residues Asn-133 and Arg-164 each coordinate substrate. Catalysis depends on His-189, which acts as the Proton acceptor.

This sequence belongs to the LDH/MDH superfamily. MDH type 2 family.

It catalyses the reaction (S)-malate + NAD(+) = oxaloacetate + NADH + H(+). Its function is as follows. Catalyzes the reversible oxidation of malate to oxaloacetate. This chain is Malate dehydrogenase, found in Acinetobacter baumannii (strain AB0057).